Consider the following 200-residue polypeptide: 3-isopropylmalate dehydratase small subunit 2 (200 aa).

This sequence belongs to the LeuD family. LeuD type 1 subfamily. In terms of assembly, heterodimer of LeuC and LeuD.

The catalysed reaction is (2R,3S)-3-isopropylmalate = (2S)-2-isopropylmalate. It functions in the pathway amino-acid biosynthesis; L-leucine biosynthesis; L-leucine from 3-methyl-2-oxobutanoate: step 2/4. In terms of biological role, catalyzes the isomerization between 2-isopropylmalate and 3-isopropylmalate, via the formation of 2-isopropylmaleate. The protein is 3-isopropylmalate dehydratase small subunit 2 of Mannheimia succiniciproducens (strain KCTC 0769BP / MBEL55E).